Reading from the N-terminus, the 881-residue chain is DNA mismatch repair protein MutS (881 aa).

Residue 632-639 (GPNMGGKS) coordinates ATP.

It belongs to the DNA mismatch repair MutS family.

This protein is involved in the repair of mismatches in DNA. It is possible that it carries out the mismatch recognition step. This protein has a weak ATPase activity. This Acinetobacter baylyi (strain ATCC 33305 / BD413 / ADP1) protein is DNA mismatch repair protein MutS.